A 306-amino-acid polypeptide reads, in one-letter code: Protoheme IX farnesyltransferase (306 aa).

8 helical membrane passes run 31–50 (VIEL…QGGW), 55–77 (LILG…NCYI), 104–124 (LVFA…ISNW), 125–145 (LAAA…TLWL), 168–188 (WAAV…IVFL), 218–235 (GRAA…ATLA), 238–258 (LLLI…LAGG), and 286–306 (ASIS…LLPF).

The protein belongs to the UbiA prenyltransferase family. Protoheme IX farnesyltransferase subfamily.

Its subcellular location is the cell membrane. The enzyme catalyses heme b + (2E,6E)-farnesyl diphosphate + H2O = Fe(II)-heme o + diphosphate. It participates in porphyrin-containing compound metabolism; heme O biosynthesis; heme O from protoheme: step 1/1. Its function is as follows. Converts heme B (protoheme IX) to heme O by substitution of the vinyl group on carbon 2 of heme B porphyrin ring with a hydroxyethyl farnesyl side group. The sequence is that of Protoheme IX farnesyltransferase from Clavibacter sepedonicus (Clavibacter michiganensis subsp. sepedonicus).